Reading from the N-terminus, the 255-residue chain is Imidazole glycerol phosphate synthase subunit HisF (255 aa).

Residues aspartate 12 and aspartate 131 contribute to the active site.

It belongs to the HisA/HisF family. In terms of assembly, heterodimer of HisH and HisF.

It localises to the cytoplasm. The enzyme catalyses 5-[(5-phospho-1-deoxy-D-ribulos-1-ylimino)methylamino]-1-(5-phospho-beta-D-ribosyl)imidazole-4-carboxamide + L-glutamine = D-erythro-1-(imidazol-4-yl)glycerol 3-phosphate + 5-amino-1-(5-phospho-beta-D-ribosyl)imidazole-4-carboxamide + L-glutamate + H(+). Its pathway is amino-acid biosynthesis; L-histidine biosynthesis; L-histidine from 5-phospho-alpha-D-ribose 1-diphosphate: step 5/9. In terms of biological role, IGPS catalyzes the conversion of PRFAR and glutamine to IGP, AICAR and glutamate. The HisF subunit catalyzes the cyclization activity that produces IGP and AICAR from PRFAR using the ammonia provided by the HisH subunit. In Salinispora arenicola (strain CNS-205), this protein is Imidazole glycerol phosphate synthase subunit HisF.